Reading from the N-terminus, the 99-residue chain is Complement inhibitor RaCI7 (99 aa).

The first 24 residues, 1 to 24 (MAALNGLVLLLLTISAMFISECYS), serve as a signal peptide directing secretion. Cystine bridges form between C37–C61, C42–C63, and C57–C78.

This sequence belongs to the RaCI family. In terms of tissue distribution, expressed in salivary glands.

Its subcellular location is the secreted. Complement inhibitor. Prevents complement-mediated C5 activation by binding to C5. Binds C5 at a different binding site than the other tick complement inhibitors OmCI and CirpT1, and the drug eculizumab. The sequence is that of Complement inhibitor RaCI7 from Dermacentor andersoni (Rocky mountain wood tick).